Reading from the N-terminus, the 178-residue chain is Inner membrane-spanning protein YciB (178 aa).

6 helical membrane passes run 1 to 21, 23 to 43, 51 to 71, 77 to 97, 120 to 140, and 150 to 170; these read MKIL…KMTG, IIIA…FTWF, MHLV…LLGD, WKPT…QFIG, LNLA…YVAF, and FKLF…GIYL.

Belongs to the YciB family.

It localises to the cell inner membrane. Plays a role in cell envelope biogenesis, maintenance of cell envelope integrity and membrane homeostasis. This is Inner membrane-spanning protein YciB from Marinomonas sp. (strain MWYL1).